The primary structure comprises 221 residues: Probable lipoprotein CT_734 (221 aa).

Residues 1-24 (MKKFIYKYSFGALLLLSGLSGLSS) form the signal peptide. Cysteine 25 is lipidated: N-palmitoyl cysteine. A lipid anchor (S-diacylglycerol cysteine) is attached at cysteine 25.

This sequence belongs to the chlamydial CPn_0875/CT_734/TC_0107 family.

It is found in the cell membrane. The chain is Probable lipoprotein CT_734 from Chlamydia trachomatis serovar D (strain ATCC VR-885 / DSM 19411 / UW-3/Cx).